A 766-amino-acid polypeptide reads, in one-letter code: Cytoplasmic polyadenylation element-binding protein 3 (766 aa).

3 disordered regions span residues 1-35 (MSQE…TSET), 131-179 (VPSR…ARRL), and 216-299 (PVPI…LPPR). 2 stretches are compositionally biased toward polar residues: residues 233-256 (ETPT…SDYQ) and 276-289 (STPN…NRDN). The 23-residue stretch at 310–332 (IFVGGVPWDITEAALKDSFGEFG) folds into the RRM domain. The tract at residues 578-602 (KAFSGPNRRSHLSSNSPSKPASLMS) is disordered. Positions 589-602 (LSSNSPSKPASLMS) are enriched in low complexity.

Functionally, cytoplasmic polyadenylation element binding protein that binds to and regulates the translation of specific mRNAs. The sequence is that of Cytoplasmic polyadenylation element-binding protein 3 (cpb-3) from Caenorhabditis remanei (Caenorhabditis vulgaris).